The following is a 338-amino-acid chain: Envelope glycoprotein K (338 aa).

Residues 1–30 form the signal peptide; the sequence is MLAVRSLQHLSTVVLITAYGLVLVWYTVFG. Over 31 to 121 the chain is Extracellular; the sequence is ASPLHRCIYA…VNCLETLWYT (91 aa). Residues 31–121 are involved in fusion; sequence ASPLHRCIYA…VNCLETLWYT (91 aa). N-linked (GlcNAc...) asparagine; by host glycosylation is found at asparagine 48 and asparagine 58. Residues 122-140 form a helical membrane-spanning segment; it reads RVRLVVVGWFLYLAFVALH. The Cytoplasmic segment spans residues 141-212; it reads QRRCMFGVVS…DPVTFLYHRP (72 aa). A helical transmembrane segment spans residues 213–233; it reads AIGVIVGCELIVRFVAVGLIV. The Extracellular segment spans residues 234–243; that stretch reads GTAFISRGAC. A helical membrane pass occupies residues 244-264; sequence AITYPLFLTITTWCFVSTIGL. Residues 265–301 lie on the Cytoplasmic side of the membrane; it reads TELYCILRRGPAPKNADKAAAPGRSKGLSGVCGRCCS. Residues 265-301 form an interaction with UL20 region; the sequence is TELYCILRRGPAPKNADKAAAPGRSKGLSGVCGRCCS. A helical transmembrane segment spans residues 302-322; that stretch reads IILSGIAMRLCYIAVVAGVVL. Over 323-338 the chain is Extracellular; sequence VALHYEQEIQRRLFDV.

This sequence belongs to the alphaherpesvirinae glycoprotein K family. In terms of assembly, interacts (via UL20 interaction region) with protein UL20 (via N-terminus); this interaction probably plays a role in the coordinate transport of protein UL20 and gK to the trans-Golgi network (TGN), and is required for the cell surface expression of gK. N-glycosylated.

It localises to the host cell membrane. The protein resides in the host endosome membrane. The protein localises to the host Golgi apparatus membrane. Functionally, glycoprotein that probably modulates membrane fusion events during secondary envelopment of cytoplasmic capsids that bud into specific trans-Golgi network (TGN)-derived membranes. Also plays a role, together with gB, in virus-induced cell-to-cell fusion (syncytia formation). Seems to block fusion of virions with infected-cell membranes. In Homo sapiens (Human), this protein is Envelope glycoprotein K (gK).